Consider the following 370-residue polypeptide: Early nodulin-like protein 1 (370 aa).

Residues 1 to 27 (MSAIMKSLCFSFLILASFATFFSVADA) form the signal peptide. In terms of domain architecture, Phytocyanin spans 28–129 (WRFNVGGNGA…GQKLIVVVLA (102 aa)). A glycan (N-linked (GlcNAc...) asparagine) is linked at asparagine 58. Cysteine 83 and cysteine 117 are joined by a disulfide. The segment covering 135 to 175 (SAPAHSPVPSVSPTQPPKSHSPVSPVAPASAPSKSQPPRSS) has biased composition (low complexity). The disordered stretch occupies residues 135 to 347 (SAPAHSPVPS…PAPSPRTNSA (213 aa)). Residues 176–194 (VSPAQPPKSSSPISHTPAL) show a composition bias toward polar residues. Composition is skewed to low complexity over residues 195–205 (SPSHATSHSPA) and 215–290 (SPVS…QSPA). Over residues 291–305 (TPSPMTPQSPSPVSS) the composition is skewed to pro residues. Positions 306 to 318 (PSPDQSAAPSDQS) are enriched in low complexity. Residues 319 to 334 (TPLAPSPSETTPTADN) show a composition bias toward polar residues. Residue asparagine 334 is glycosylated (N-linked (GlcNAc...) asparagine). Asparagine 345 carries GPI-anchor amidated asparagine lipidation. The propeptide at 346 to 370 (SASGLAVTSVMSTLFSATFTFLMFA) is removed in mature form.

It belongs to the early nodulin-like (ENODL) family. Mostly expressed in stems, leaves and flowers, and, to a lower extent, in seedlings, roots and seeds.

It is found in the cell membrane. Its function is as follows. May act as a carbohydrate transporter. The sequence is that of Early nodulin-like protein 1 from Arabidopsis thaliana (Mouse-ear cress).